The chain runs to 140 residues: Large ribosomal subunit protein uL13 (140 aa).

The protein belongs to the universal ribosomal protein uL13 family. Part of the 50S ribosomal subunit.

In terms of biological role, this protein is one of the early assembly proteins of the 50S ribosomal subunit, although it is not seen to bind rRNA by itself. It is important during the early stages of 50S assembly. The polypeptide is Large ribosomal subunit protein uL13 (Sulfurimonas denitrificans (strain ATCC 33889 / DSM 1251) (Thiomicrospira denitrificans (strain ATCC 33889 / DSM 1251))).